Reading from the N-terminus, the 227-residue chain is PKHD-type hydroxylase BTH_II1201 (227 aa).

Positions 78 to 178 (KVFPPLFNRY…RVASFFWIQS (101 aa)) constitute a Fe2OG dioxygenase domain. Fe cation-binding residues include histidine 96, aspartate 98, and histidine 159. Arginine 169 lines the 2-oxoglutarate pocket.

Fe(2+) serves as cofactor. L-ascorbate is required as a cofactor.

This chain is PKHD-type hydroxylase BTH_II1201, found in Burkholderia thailandensis (strain ATCC 700388 / DSM 13276 / CCUG 48851 / CIP 106301 / E264).